A 196-amino-acid chain; its full sequence is Gastrula zinc finger protein XlCGF8.2DB (196 aa).

7 C2H2-type zinc fingers span residues 6-28, 34-56, 62-84, 90-112, 118-140, 146-168, and 174-196; these read FTCKECGKGFTQKRNLASHMTIH, FSCTECGKGFTQKRNLASHLTIH, FPCTECGKGFTQKSNLVSHMKIH, FTCTECGKEFAHKHRLLGHLKIH, FSCTECGKHFAHKYHLVSHMKIH, FTCTECGEHFANKVSLLGHLKMH, and FTCTECGNSFTQVSSLVSHMKIH.

The protein belongs to the krueppel C2H2-type zinc-finger protein family.

It is found in the nucleus. Its function is as follows. May be involved in transcriptional regulation. The chain is Gastrula zinc finger protein XlCGF8.2DB from Xenopus laevis (African clawed frog).